Reading from the N-terminus, the 38-residue chain is Large ribosomal subunit protein bL36 (38 aa).

It belongs to the bacterial ribosomal protein bL36 family.

The protein is Large ribosomal subunit protein bL36 of Lactobacillus johnsonii (strain CNCM I-12250 / La1 / NCC 533).